We begin with the raw amino-acid sequence, 223 residues long: MKKAVCIMSGGMDSTLCAVMAKREGYEIIALHFDYEQRTMRREKMAFEQICDYLGIKKRLNLDVSFIADIGGNALTDKNLAVSKSGLGDEIPNTYVPFRNGIFISIAAALAEKEGAQAIYIGVVEEDSSGYPDCKGEFIERMNAAINVGTAPETKIKIVTPLVNLSKADIVAKSLEFGSPLELTWSCYEREDEACGLCDSCRLRLRGFERAGVKDKIKYANLS.

Residue 8 to 18 (MSGGMDSTLCA) coordinates ATP. Residues cysteine 187, cysteine 195, cysteine 198, and cysteine 201 each coordinate Zn(2+).

The protein belongs to the QueC family. The cofactor is Zn(2+).

It carries out the reaction 7-carboxy-7-deazaguanine + NH4(+) + ATP = 7-cyano-7-deazaguanine + ADP + phosphate + H2O + H(+). The protein operates within purine metabolism; 7-cyano-7-deazaguanine biosynthesis. Catalyzes the ATP-dependent conversion of 7-carboxy-7-deazaguanine (CDG) to 7-cyano-7-deazaguanine (preQ(0)). The protein is 7-cyano-7-deazaguanine synthase of Campylobacter curvus (strain 525.92).